The following is a 268-amino-acid chain: Putative carbamate hydrolase RutD (268 aa).

The region spanning 24 to 243 (VILSAGLGGS…NATLDIAPWG (220 aa)) is the AB hydrolase-1 domain.

It belongs to the AB hydrolase superfamily. Hydrolase RutD family.

The catalysed reaction is carbamate + 2 H(+) = NH4(+) + CO2. Functionally, involved in pyrimidine catabolism. May facilitate the hydrolysis of carbamate, a reaction that can also occur spontaneously. The chain is Putative carbamate hydrolase RutD from Caulobacter sp. (strain K31).